The chain runs to 110 residues: Small ribosomal subunit protein mS33 (110 aa).

Positions 84–95 (KRRGKGAPKKMK) are enriched in basic residues. Residues 84 to 110 (KRRGKGAPKKMKKDAAATAKGKGKKKK) are disordered.

The protein belongs to the mitochondrion-specific ribosomal protein mS33 family. Component of the mitochondrial small ribosomal subunit (mt-SSU). Mature yeast 74S mitochondrial ribosomes consist of a small (37S) and a large (54S) subunit. The 37S small subunit contains a 15S ribosomal RNA (15S mt-rRNA) and 34 different proteins. The 54S large subunit contains a 21S rRNA (21S mt-rRNA) and 46 different proteins.

Its subcellular location is the mitochondrion. Component of the mitochondrial ribosome (mitoribosome), a dedicated translation machinery responsible for the synthesis of mitochondrial genome-encoded proteins, including at least some of the essential transmembrane subunits of the mitochondrial respiratory chain. The mitoribosomes are attached to the mitochondrial inner membrane and translation products are cotranslationally integrated into the membrane. The polypeptide is Small ribosomal subunit protein mS33 (RSM27) (Saccharomyces cerevisiae (strain ATCC 204508 / S288c) (Baker's yeast)).